The following is a 212-amino-acid chain: Imidazole glycerol phosphate synthase subunit HisH (212 aa).

A Glutamine amidotransferase type-1 domain is found at 1–211 (MIGVIDYGMG…TKMAAEQQVK (211 aa)). Cysteine 79 serves as the catalytic Nucleophile. Residues histidine 186 and glutamate 188 contribute to the active site.

In terms of assembly, heterodimer of HisH and HisF.

It localises to the cytoplasm. The catalysed reaction is 5-[(5-phospho-1-deoxy-D-ribulos-1-ylimino)methylamino]-1-(5-phospho-beta-D-ribosyl)imidazole-4-carboxamide + L-glutamine = D-erythro-1-(imidazol-4-yl)glycerol 3-phosphate + 5-amino-1-(5-phospho-beta-D-ribosyl)imidazole-4-carboxamide + L-glutamate + H(+). The enzyme catalyses L-glutamine + H2O = L-glutamate + NH4(+). Its pathway is amino-acid biosynthesis; L-histidine biosynthesis; L-histidine from 5-phospho-alpha-D-ribose 1-diphosphate: step 5/9. In terms of biological role, IGPS catalyzes the conversion of PRFAR and glutamine to IGP, AICAR and glutamate. The HisH subunit catalyzes the hydrolysis of glutamine to glutamate and ammonia as part of the synthesis of IGP and AICAR. The resulting ammonia molecule is channeled to the active site of HisF. The chain is Imidazole glycerol phosphate synthase subunit HisH from Bacillus velezensis (strain DSM 23117 / BGSC 10A6 / LMG 26770 / FZB42) (Bacillus amyloliquefaciens subsp. plantarum).